Reading from the N-terminus, the 826-residue chain is Ferric-pyoverdine M114 receptor PbuA (826 aa).

Residues 1 to 44 form the signal peptide; it reads MSASRFMLRPLTRALLMHGATRTRLAGTGLGLALTLTAAPYVQA. The short motif at 110–119 is the TonB box element; the sequence is DGNTVTVLGP. The TBDR plug domain occupies 160-271; that stretch reads SLKETPQSVT…TAGGVNFVRK (112 aa). The TBDR beta-barrel domain maps to 276 to 826; that stretch reads TAHTQLSLSA…NFVMSVKADF (551 aa). The TonB C-terminal box signature appears at 809–826; that stretch reads GNFYGDPRNFVMSVKADF.

The protein belongs to the TonB-dependent receptor family.

It localises to the cell outer membrane. Functionally, specific receptor for the siderophore ferric pyoverdine (pseudobactin) M114. In Pseudomonas sp. (strain M114), this protein is Ferric-pyoverdine M114 receptor PbuA (pbuA).